The sequence spans 438 residues: sn-glycerol-3-phosphate-binding periplasmic protein UgpB (438 aa).

The signal sequence occupies residues methionine 1 to alanine 23. The sn-glycerol 3-phosphate site is built by tyrosine 65, glutamate 89, serine 144, serine 270, glycine 307, tyrosine 346, and arginine 397.

Belongs to the bacterial solute-binding protein 1 family. As to quaternary structure, the complex is composed of two ATP-binding proteins (UgpC), two transmembrane proteins (UgpA and UgpE) and a solute-binding protein (UgpB).

It localises to the periplasm. Functionally, part of the ABC transporter complex UgpBAEC involved in sn-glycerol-3-phosphate (G3P) import. Binds G3P. The chain is sn-glycerol-3-phosphate-binding periplasmic protein UgpB (ugpB) from Salmonella paratyphi A (strain ATCC 9150 / SARB42).